The chain runs to 426 residues: Tryptophan--tRNA ligase (426 aa).

A 'HIGH' region motif is present at residues 66 to 74 (PSGEMHLGN). Residues 314-318 (KMSSS) carry the 'KMSKS' region motif.

Belongs to the class-I aminoacyl-tRNA synthetase family.

It localises to the cytoplasm. It carries out the reaction tRNA(Trp) + L-tryptophan + ATP = L-tryptophyl-tRNA(Trp) + AMP + diphosphate + H(+). The protein is Tryptophan--tRNA ligase of Thermoplasma acidophilum (strain ATCC 25905 / DSM 1728 / JCM 9062 / NBRC 15155 / AMRC-C165).